The sequence spans 266 residues: MPEVTLTTLNGLKAKGEKITMLTCYDATFAKAASQAGVEVLLVGDSLGMVLQGHDSTLPVTTAEMAYHTASVKRGNDGALILTDLPFMAHATPEQAFANSATLMQAGAHMVKIEGAAWLAETIRLLAERGVPVCAHMGLTPQTVNVLGGYKVQGRQEAQARQMRADAIALEQAGAAMLLLECVPSELAAEITNAVGIPVIGIGAGSATDGQVLVLHDMLGLSLSGRVPKFVKNFMQGQPDIHSALVAYVEAVKQVSFPGSEHGFSA.

The Mg(2+) site is built by Asp45 and Asp84. 3-methyl-2-oxobutanoate is bound by residues 45 to 46 (DS), Asp84, and Lys112. Glu114 contributes to the Mg(2+) binding site. Glu181 (proton acceptor) is an active-site residue.

The protein belongs to the PanB family. As to quaternary structure, homodecamer; pentamer of dimers. The cofactor is Mg(2+).

It is found in the cytoplasm. It catalyses the reaction 3-methyl-2-oxobutanoate + (6R)-5,10-methylene-5,6,7,8-tetrahydrofolate + H2O = 2-dehydropantoate + (6S)-5,6,7,8-tetrahydrofolate. The protein operates within cofactor biosynthesis; (R)-pantothenate biosynthesis; (R)-pantoate from 3-methyl-2-oxobutanoate: step 1/2. Its function is as follows. Catalyzes the reversible reaction in which hydroxymethyl group from 5,10-methylenetetrahydrofolate is transferred onto alpha-ketoisovalerate to form ketopantoate. The chain is 3-methyl-2-oxobutanoate hydroxymethyltransferase from Pseudomonas putida (strain ATCC 700007 / DSM 6899 / JCM 31910 / BCRC 17059 / LMG 24140 / F1).